Reading from the N-terminus, the 264-residue chain is MTNSLLICFTILGLAASSPTKPIGDIRIVGGEDIVITEAPYQVSVMFRGAHSCGGTLVAADIVVTAAHCVMSFAPEDYRIRVGSSFHQRDGMLYDVGDLAWHPDFNFASMDNDIAILWLPKPVMFGDTVEAIEMVETNSEIPDGDITIVTGWGHMEEGGGNPSVLQRVIVPKINEAACAEAYSPIYAITPRMLCAGTPEGGKDACQGDSGGPLVHKKKLAGIVSWGLGCARPEYPGVYTKVSALREWVDENITNLRLKHILRRF.

Positions M1–A15 are cleaved as a signal peptide. The propeptide at A16–R27 is activation peptide. One can recognise a Peptidase S1 domain in the interval I28 to T253. Residues C53 and C69 are joined by a disulfide bond. Residues H68 and D113 each act as charge relay system in the active site. A disulfide bridge connects residues C178 and C194. D203 contacts substrate. C205 and C229 are joined by a disulfide. Catalysis depends on S209, which acts as the Charge relay system. A glycan (N-linked (GlcNAc...) asparagine) is linked at N251.

The protein belongs to the peptidase S1 family. Post-translationally, cleavage after Arg-27 leads to beta-VTN protease and subsequent cleavage after Arg-89 leads to alpha-VTN.

In terms of biological role, responsible for the degradation of vitellin in eggs at the head pigmentation stage. This chain is Vitellin-degrading protease, found in Bombyx mori (Silk moth).